The sequence spans 1208 residues: Spindle pole body protein pcp1 (1208 aa).

The span at 1–17 shows a compositional bias: basic and acidic residues; it reads MSERDFNTQSPKFKDEN. The interval 1 to 91 is disordered; the sequence is MSERDFNTQS…DKYNGSLGDK (91 aa). Over residues 48 to 64 the composition is skewed to polar residues; the sequence is NDKSSFQTPLRNGSYQP. Coiled-coil stretches lie at residues 151 to 375, 387 to 803, 874 to 1091, and 1177 to 1204; these read LREQ…KENQ, TDSM…ANIE, GTET…QSTQ, and ERMK…AKAK. Phosphoserine is present on Ser-906.

Interacts with ccq1.

The protein localises to the nucleus. Its subcellular location is the cytoplasm. The protein resides in the cytoskeleton. It localises to the microtubule organizing center. It is found in the spindle pole body. Its function is as follows. Spindle pole body component that binds calmodulin. Overexpression of pcp1 causes the formation of supernumerary SPB-like structures and disrupts both mitotic spindle assembly and chromosome segregation. The protein is Spindle pole body protein pcp1 (pcp1) of Schizosaccharomyces pombe (strain 972 / ATCC 24843) (Fission yeast).